A 348-amino-acid chain; its full sequence is Fe-S cluster assembly protein DRE2 (348 aa).

Residues Met1 to Val185 form an N-terminal SAM-like domain region. 2 disordered regions span residues Gln128–Leu148 and Lys162–Lys213. The segment at Val186–Ser241 is linker. The span at Glu188–Ser206 shows a compositional bias: acidic residues. The [2Fe-2S] cluster site is built by Cys248, Cys259, Cys262, and Cys264. The interval Cys248–Cys264 is fe-S binding site A. Positions 311, 314, 322, and 325 each coordinate [4Fe-4S] cluster. Short sequence motifs (cx2C motif) lie at residues Cys311–Cys314 and Cys322–Cys325. Residues Cys311 to Cys325 form a fe-S binding site B region.

The protein belongs to the anamorsin family. As to quaternary structure, monomer. Interacts with TAH18. Interacts with MIA40. It depends on [2Fe-2S] cluster as a cofactor. The cofactor is [4Fe-4S] cluster.

It localises to the cytoplasm. Its subcellular location is the mitochondrion intermembrane space. Functionally, component of the cytosolic iron-sulfur (Fe-S) protein assembly (CIA) machinery required for the maturation of extramitochondrial Fe-S proteins. Part of an electron transfer chain functioning in an early step of cytosolic Fe-S biogenesis, facilitating the de novo assembly of a [4Fe-4S] cluster on the scaffold complex CFD1-NBP35. Electrons are transferred to DRE2 from NADPH via the FAD- and FMN-containing protein TAH18. TAH18-DRE2 are also required for the assembly of the diferric tyrosyl radical cofactor of ribonucleotide reductase (RNR), probably by providing electrons for reduction during radical cofactor maturation in the catalytic small subunit RNR2. This chain is Fe-S cluster assembly protein DRE2, found in Lachancea thermotolerans (strain ATCC 56472 / CBS 6340 / NRRL Y-8284) (Yeast).